The chain runs to 235 residues: uncharacterized protein (235 aa).

Disordered stretches follow at residues 1–47 (MSHK…QSTN) and 78–128 (QEHH…KQPQ). The span at 20-33 (HPPGQSLSSISWSP) shows a compositional bias: polar residues. The segment covering 84 to 98 (QQQQQQRQNIRSQNS) has biased composition (low complexity). The span at 106–128 (VQESQWTSSASNSSLKKQEKQPQ) shows a compositional bias: polar residues.

This is an uncharacterized protein from Saccharomyces cerevisiae (strain ATCC 204508 / S288c) (Baker's yeast).